Consider the following 594-residue polypeptide: Potassium-transporting ATPase potassium-binding subunit (594 aa).

10 consecutive transmembrane segments (helical) span residues 3-23, 67-87, 136-156, 179-199, 287-307, 314-334, 415-435, 453-473, 519-539, and 562-582; these read ADFLGLLLLYLAILLCAAPLL, AVAMLVFNVLGVLAVYALQRL, ALTVQNFVSAATGIAVLIALV, LYVLLPLSFILALALVSQGVV, LEMLAILLIPAALCWTFGEMV, VAILAAMTVLFAGFSASAAYF, GLYGMLAFAILAVFIAGLMIG, VALVILATPALVLAGTAVAVL, VLLGLAMWFGRYTIIVAILAL, and LFVALLVGAVLLVGALTYVPA.

This sequence belongs to the KdpA family. The system is composed of three essential subunits: KdpA, KdpB and KdpC.

It is found in the cell inner membrane. Its function is as follows. Part of the high-affinity ATP-driven potassium transport (or Kdp) system, which catalyzes the hydrolysis of ATP coupled with the electrogenic transport of potassium into the cytoplasm. This subunit binds the periplasmic potassium ions and delivers the ions to the membrane domain of KdpB through an intramembrane tunnel. This chain is Potassium-transporting ATPase potassium-binding subunit, found in Bordetella bronchiseptica (strain ATCC BAA-588 / NCTC 13252 / RB50) (Alcaligenes bronchisepticus).